The following is a 2871-amino-acid chain: Fibrillin-1 (2871 aa).

Residues methionine 1–glycine 24 form the signal peptide. The propeptide occupies alanine 25–arginine 44. The segment at arginine 45–isoleucine 81 is fibrillin unique N-terminal (FUN) domain. The N-terminal domain stretch occupies residues arginine 45–threonine 450. 11 cysteine pairs are disulfide-bonded: cysteine 59–cysteine 68, cysteine 67–cysteine 80, cysteine 85–cysteine 94, cysteine 89–cysteine 100, cysteine 102–cysteine 111, cysteine 119–cysteine 129, cysteine 123–cysteine 134, cysteine 136–cysteine 145, cysteine 150–cysteine 160, cysteine 154–cysteine 166, and cysteine 168–cysteine 177. 3 EGF-like domains span residues isoleucine 81–glycine 112, serine 115–glycine 146, and glutamine 147–glutamate 178. Positions cysteine 119–isoleucine 329 are interaction with MFAP4. The region spanning glycine 184–isoleucine 236 is the TB 1 domain. The segment at cysteine 195 to cysteine 221 is hybrid domain 1. The 42-residue stretch at aspartate 246–glutamate 287 folds into the EGF-like 4; calcium-binding domain. 6 cysteine pairs are disulfide-bonded: cysteine 250/cysteine 262, cysteine 257/cysteine 271, cysteine 273/cysteine 286, cysteine 292/cysteine 304, cysteine 299/cysteine 313, and cysteine 315/cysteine 328. A glycan (O-linked (Glc) serine) is linked at serine 268. One can recognise an EGF-like 5; calcium-binding domain in the interval aspartate 288–isoleucine 329. The region spanning glycine 334–cysteine 389 is the TB 2 domain. N-linked (GlcNAc...) asparagine glycosylation occurs at asparagine 448. The EGF-like 6 domain occupies valine 449–isoleucine 489. 15 disulfide bridges follow: cysteine 453-cysteine 465, cysteine 460-cysteine 474, cysteine 476-cysteine 488, cysteine 494-cysteine 504, cysteine 499-cysteine 513, cysteine 515-cysteine 528, cysteine 534-cysteine 546, cysteine 541-cysteine 555, cysteine 557-cysteine 570, cysteine 576-cysteine 587, cysteine 582-cysteine 596, cysteine 598-cysteine 611, cysteine 617-cysteine 628, cysteine 623-cysteine 637, and cysteine 639-cysteine 652. O-linked (Glc) serine glycosylation occurs at serine 471. The 40-residue stretch at aspartate 490–arginine 529 folds into the EGF-like 7; calcium-binding domain. Serine 510 is a glycosylation site (O-linked (Glc) serine). The EGF-like 8; calcium-binding domain maps to aspartate 530–glutamate 571. The region spanning aspartate 572–lysine 612 is the EGF-like 9; calcium-binding domain. Positions aspartate 613 to valine 653 constitute an EGF-like 10; calcium-binding domain. Residues serine 659 to cysteine 711 form the TB 3 domain. Residues aspartate 723–valine 764 enclose the EGF-like 11; calcium-binding domain. 16 cysteine pairs are disulfide-bonded: cysteine 727/cysteine 739, cysteine 734/cysteine 748, cysteine 750/cysteine 763, cysteine 769/cysteine 781, cysteine 776/cysteine 790, cysteine 792/cysteine 805, cysteine 811/cysteine 821, cysteine 816/cysteine 830, cysteine 832/cysteine 845, cysteine 853/cysteine 875, cysteine 862/cysteine 887, cysteine 876/cysteine 890, cysteine 896/cysteine 908, cysteine 914/cysteine 926, cysteine 921/cysteine 935, and cysteine 937/cysteine 950. The region spanning aspartate 765–glutamate 806 is the EGF-like 12; calcium-binding domain. The EGF-like 13; calcium-binding domain maps to aspartate 807–isoleucine 846. The TB 4 domain occupies glycine 851 to arginine 902. Residues cysteine 862 to cysteine 887 form a hybrid domain 2 region. The EGF-like 14; calcium-binding domain occupies aspartate 910–leucine 951. In terms of domain architecture, TB 5 spans glutamate 956–cysteine 1008. Positions aspartate 1028–threonine 1069 constitute an EGF-like 15; calcium-binding domain. 46 cysteine pairs are disulfide-bonded: cysteine 1032/cysteine 1044, cysteine 1039/cysteine 1053, cysteine 1055/cysteine 1068, cysteine 1074/cysteine 1086, cysteine 1081/cysteine 1095, cysteine 1097/cysteine 1111, cysteine 1117/cysteine 1129, cysteine 1124/cysteine 1138, cysteine 1140/cysteine 1153, cysteine 1159/cysteine 1171, cysteine 1166/cysteine 1180, cysteine 1182/cysteine 1195, cysteine 1201/cysteine 1212, cysteine 1208/cysteine 1221, cysteine 1223/cysteine 1236, cysteine 1242/cysteine 1254, cysteine 1249/cysteine 1263, cysteine 1265/cysteine 1278, cysteine 1284/cysteine 1296, cysteine 1291/cysteine 1305, cysteine 1307/cysteine 1320, cysteine 1326/cysteine 1339, cysteine 1333/cysteine 1348, cysteine 1350/cysteine 1361, cysteine 1367/cysteine 1380, cysteine 1374/cysteine 1389, cysteine 1391/cysteine 1402, cysteine 1408/cysteine 1420, cysteine 1415/cysteine 1429, cysteine 1431/cysteine 1444, cysteine 1450/cysteine 1461, cysteine 1456/cysteine 1470, cysteine 1472/cysteine 1485, cysteine 1491/cysteine 1502, cysteine 1497/cysteine 1511, cysteine 1513/cysteine 1526, cysteine 1534/cysteine 1562, cysteine 1549/cysteine 1574, cysteine 1563/cysteine 1577, cysteine 1564/cysteine 1589, cysteine 1610/cysteine 1622, cysteine 1617/cysteine 1631, cysteine 1633/cysteine 1646, cysteine 1652/cysteine 1663, cysteine 1658/cysteine 1672, and cysteine 1674/cysteine 1687. Asparagine 1067 carries N-linked (GlcNAc...) asparagine glycosylation. The 43-residue stretch at aspartate 1070–methionine 1112 folds into the EGF-like 16; calcium-binding domain. In terms of domain architecture, EGF-like 17; calcium-binding spans aspartate 1113 to isoleucine 1154. The O-linked (Glc) serine glycan is linked to serine 1135. A glycan (N-linked (GlcNAc...) asparagine) is linked at asparagine 1149. In terms of domain architecture, EGF-like 18; calcium-binding spans aspartate 1155 to valine 1196. Residues aspartate 1197–threonine 1237 enclose the EGF-like 19; calcium-binding domain. Serine 1218 is a glycosylation site (O-linked (Glc) serine). The 42-residue stretch at aspartate 1238–valine 1279 folds into the EGF-like 20; calcium-binding domain. One can recognise an EGF-like 21; calcium-binding domain in the interval aspartate 1280 to threonine 1321. Serine 1302 is a glycosylation site (O-linked (Glc) serine). Residues aspartate 1322 to threonine 1362 enclose the EGF-like 22; calcium-binding domain. The O-linked (Glc) serine glycan is linked to serine 1345. One can recognise an EGF-like 23; calcium-binding domain in the interval aspartate 1363 to threonine 1403. N-linked (GlcNAc...) asparagine glycosylation is present at asparagine 1369. O-linked (Glc) serine glycosylation occurs at serine 1386. Positions aspartate 1404–glutamate 1445 constitute an EGF-like 24; calcium-binding domain. One can recognise an EGF-like 25; calcium-binding domain in the interval aspartate 1446–threonine 1486. Asparagine 1484 carries an N-linked (GlcNAc...) asparagine glycan. An EGF-like 26; calcium-binding domain is found at aspartate 1487 to valine 1527. Serine 1508 carries an O-linked (Glc) serine glycan. The segment at aspartate 1528 to arginine 2731 is C-terminal domain. Residues glycine 1532 to cysteine 1589 form the TB 6 domain. The Cell attachment site signature appears at arginine 1541–aspartate 1543. Asparagine 1581 carries an N-linked (GlcNAc...) asparagine glycan. In terms of domain architecture, EGF-like 27; calcium-binding spans aspartate 1606 to aspartate 1647. A glycan (O-linked (Glc) serine) is linked at serine 1628. The EGF-like 28; calcium-binding domain maps to aspartate 1648–methionine 1688. A glycan (N-linked (GlcNAc...) asparagine) is linked at asparagine 1669. In terms of domain architecture, TB 7 spans serine 1693–cysteine 1748. Asparagine 1703 and asparagine 1713 each carry an N-linked (GlcNAc...) asparagine glycan. One can recognise an EGF-like 29; calcium-binding domain in the interval aspartate 1766 to glutamate 1807. 40 disulfides stabilise this stretch: cysteine 1770-cysteine 1782, cysteine 1777-cysteine 1791, cysteine 1793-cysteine 1806, cysteine 1812-cysteine 1824, cysteine 1818-cysteine 1833, cysteine 1835-cysteine 1847, cysteine 1853-cysteine 1865, cysteine 1860-cysteine 1874, cysteine 1876-cysteine 1889, cysteine 1895-cysteine 1905, cysteine 1900-cysteine 1914, cysteine 1916-cysteine 1928, cysteine 1934-cysteine 1947, cysteine 1942-cysteine 1956, cysteine 1958-cysteine 1971, cysteine 1977-cysteine 1989, cysteine 1984-cysteine 1998, cysteine 2000-cysteine 2011, cysteine 2017-cysteine 2029, cysteine 2024-cysteine 2038, cysteine 2040-cysteine 2053, cysteine 2061-cysteine 2083, cysteine 2070-cysteine 2096, cysteine 2084-cysteine 2099, cysteine 2085-cysteine 2111, cysteine 2131-cysteine 2142, cysteine 2137-cysteine 2151, cysteine 2153-cysteine 2164, cysteine 2170-cysteine 2181, cysteine 2176-cysteine 2190, cysteine 2192-cysteine 2204, cysteine 2210-cysteine 2221, cysteine 2217-cysteine 2230, cysteine 2232-cysteine 2245, cysteine 2251-cysteine 2265, cysteine 2258-cysteine 2274, cysteine 2276-cysteine 2289, cysteine 2295-cysteine 2307, cysteine 2302-cysteine 2316, and cysteine 2318-cysteine 2331. Residues aspartate 1808 to asparagine 1848 enclose the EGF-like 30; calcium-binding domain. Serine 1830 carries O-linked (Glc) serine glycosylation. The 42-residue stretch at aspartate 1849–leucine 1890 folds into the EGF-like 31; calcium-binding domain. An O-linked (Glc) serine glycan is attached at serine 1871. The region spanning aspartate 1891–isoleucine 1929 is the EGF-like 32; calcium-binding domain. Asparagine 1902 carries N-linked (GlcNAc...) asparagine glycosylation. A glycan (O-linked (Glc) serine) is linked at serine 1911. One can recognise an EGF-like 33; calcium-binding domain in the interval aspartate 1930–valine 1972. The O-linked (Glc) serine glycan is linked to serine 1953. The region spanning aspartate 1973 to glutamate 2012 is the EGF-like 34; calcium-binding domain. One can recognise an EGF-like 35; calcium-binding domain in the interval aspartate 2013–glutamine 2054. Serine 2035 is a glycosylation site (O-linked (Glc) serine). One can recognise a TB 8 domain in the interval serine 2059–cysteine 2111. A glycan (N-linked (GlcNAc...) asparagine) is linked at asparagine 2077. The 39-residue stretch at aspartate 2127–valine 2165 folds into the EGF-like 36; calcium-binding domain. O-linked (Glc) serine glycosylation is present at serine 2148. One can recognise an EGF-like 37; calcium-binding domain in the interval aspartate 2166 to glutamate 2205. N-linked (GlcNAc...) asparagine glycosylation occurs at asparagine 2178. An EGF-like 38; calcium-binding domain is found at aspartate 2206 to lysine 2246. A glycan (O-linked (Glc) serine) is linked at serine 2227. The region spanning aspartate 2247–valine 2290 is the EGF-like 39; calcium-binding domain. In terms of domain architecture, EGF-like 40; calcium-binding spans aspartate 2291–leucine 2332. An O-linked (Glc) serine glycan is attached at serine 2313. The TB 9 domain maps to glycine 2337–cysteine 2390. In terms of domain architecture, EGF-like 41; calcium-binding spans aspartate 2402–valine 2443. Cystine bridges form between cysteine 2406/cysteine 2418, cysteine 2413/cysteine 2427, cysteine 2429/cysteine 2442, cysteine 2448/cysteine 2459, cysteine 2455/cysteine 2468, cysteine 2470/cysteine 2483, cysteine 2489/cysteine 2500, cysteine 2496/cysteine 2509, cysteine 2511/cysteine 2522, cysteine 2528/cysteine 2541, cysteine 2535/cysteine 2550, cysteine 2552/cysteine 2565, cysteine 2571/cysteine 2581, cysteine 2577/cysteine 2590, cysteine 2592/cysteine 2605, cysteine 2611/cysteine 2622, cysteine 2617/cysteine 2631, cysteine 2633/cysteine 2646, cysteine 2652/cysteine 2663, cysteine 2659/cysteine 2672, and cysteine 2674/cysteine 2686. The EGF-like 42; calcium-binding domain maps to aspartate 2444–lysine 2484. Serine 2465 is a glycosylation site (O-linked (Glc) serine). The 39-residue stretch at aspartate 2485–isoleucine 2523 folds into the EGF-like 43; calcium-binding domain. An EGF-like 44; calcium-binding domain is found at aspartate 2524 to glutamate 2566. O-linked (Glc) serine glycosylation occurs at serine 2547. Residues aspartate 2567 to valine 2606 form the EGF-like 45; calcium-binding domain. Positions aspartate 2607–glutamine 2647 constitute an EGF-like 46; calcium-binding domain. O-linked (Glc) serine glycosylation occurs at serine 2628. The EGF-like 47; calcium-binding domain occupies aspartate 2648–valine 2687. 2 positions are modified to phosphoserine: serine 2702 and serine 2709. Residues asparagine 2734, asparagine 2750, and asparagine 2767 are each glycosylated (N-linked (GlcNAc...) asparagine).

Belongs to the fibrillin family. Interacts with COL16A1. Interacts with integrin alpha-V/beta-3. Interacts with ADAMTS10; this interaction promotes microfibril assembly. Interacts with THSD4; this interaction promotes fibril formation. Interacts (via N-terminal domain) with FBLN2 and FBLN5. Interacts with ELN. Forms a ternary complex with ELN and FBLN2 or FBLN5 and a significant interaction with ELN seen only in the presence of FBLN2 or FBLN5. Interacts (via N-terminal domain) with LTBP2 (via C-terminal domain) in a Ca(+2)-dependent manner. Interacts (via N-terminal domain) with LTBP1 (via C-terminal domain). Interacts with integrins ITGA5:ITGB1, ITGAV:ITGB3 and ITGAV:ITGB6. Interacts (via N-terminal domain) with BMP2, BMP4, BMP7, BMP10 and GDF5. Interacts (via N-terminal domain) with MFAP2 and MFAP5. Interacts with ADAMTSL5. Interacts with MFAP4. Interacts (via N-terminal domain) with TNFSF11 in a Ca(+2)-dependent manner. Interacts (via N-terminal domain) with EFEMP2; this interaction inhibits EFEMP2 binding to LOX and ELN. In terms of processing, cleavage of N- and C-terminus by furin is required for incorporation into the extracellular matrix and assembly into microfibrils. The C-terminus, which corresponds to the Asprosin chain, was initially thought to constitute a propeptide. Fibrillin-1 and Asprosin chains are still linked together during the secretion from cells, but are subsequently separated by furin, an essential step for incorporation of Fibrillin-1 into the nascent microfibrils. Post-translationally, forms intermolecular disulfide bonds either with other fibrillin-1 molecules or with other components of the microfibrils. O-glycosylated on serine residues by POGLUT2 and POGLUT3 which is necessary for efficient protein secretion.

The protein localises to the secreted. Its subcellular location is the extracellular space. It is found in the extracellular matrix. Structural component of the 10-12 nm diameter microfibrils of the extracellular matrix, which conveys both structural and regulatory properties to load-bearing connective tissues. Fibrillin-1-containing microfibrils provide long-term force bearing structural support. In tissues such as the lung, blood vessels and skin, microfibrils form the periphery of the elastic fiber, acting as a scaffold for the deposition of elastin. In addition, microfibrils can occur as elastin-independent networks in tissues such as the ciliary zonule, tendon, cornea and glomerulus where they provide tensile strength and have anchoring roles. Fibrillin-1 also plays a key role in tissue homeostasis through specific interactions with growth factors, such as the bone morphogenetic proteins (BMPs), growth and differentiation factors (GDFs) and latent transforming growth factor-beta-binding proteins (LTBPs), cell-surface integrins and other extracellular matrix protein and proteoglycan components. Regulates osteoblast maturation by controlling TGF-beta bioavailability and calibrating TGF-beta and BMP levels, respectively. Negatively regulates osteoclastogenesis by binding and sequestering an osteoclast differentiation and activation factor TNFSF11. This leads to disruption of TNFSF11-induced Ca(2+) signaling and impairment of TNFSF11-mediated nuclear translocation and activation of transcription factor NFATC1 which regulates genes important for osteoclast differentiation and function. Mediates cell adhesion via its binding to cell surface receptors integrins ITGAV:ITGB3 and ITGA5:ITGB1. Binds heparin and this interaction plays an important role in the assembly of microfibrils. Functionally, hormone that targets the liver to increase plasma glucose levels. Secreted by white adipose tissue and circulates in the plasma. Acts in response to fasting and promotes blood glucose elevation by binding to the surface of hepatocytes. Promotes hepatocyte glucose release by activating the protein kinase A activity in the liver, resulting in rapid glucose release into the circulation. In Bos taurus (Bovine), this protein is Fibrillin-1.